We begin with the raw amino-acid sequence, 856 residues long: Subtilisin-like protease SBT2.2 (856 aa).

Positions 1–21 (MRRVLMVNFGVLLLFCFGVLS) are cleaved as a signal peptide. Positions 22 to 159 (NSFGQDNGGD…IVLDFSVRTA (138 aa)) are cleaved as a propeptide — activation peptide. N-linked (GlcNAc...) asparagine glycosylation is found at Asn-35 and Asn-85. The Inhibitor I9 domain maps to 40 to 159 (VYIVTLRQAS…IVLDFSVRTA (120 aa)). The Peptidase S8 domain maps to 164–709 (PQFMGLPKGA…NGFVNATAAL (546 aa)). Catalysis depends on Asp-193, which acts as the Charge relay system. N-linked (GlcNAc...) asparagine glycosylation is found at Asn-204 and Asn-255. Residue His-269 is the Charge relay system of the active site. Asn-412, Asn-441, Asn-495, Asn-540, and Asn-568 each carry an N-linked (GlcNAc...) asparagine glycan. One can recognise a PA domain in the interval 432 to 528 (MISALDALKN…MDMPGIIIPS (97 aa)). Residue Ser-634 is the Charge relay system of the active site. 7 N-linked (GlcNAc...) asparagine glycosylation sites follow: Asn-704, Asn-730, Asn-738, Asn-748, Asn-767, Asn-782, and Asn-823.

It belongs to the peptidase S8 family.

The protein localises to the secreted. This chain is Subtilisin-like protease SBT2.2, found in Arabidopsis thaliana (Mouse-ear cress).